Consider the following 602-residue polypeptide: DNA mismatch repair protein MutL (602 aa).

A disordered region spans residues 337-367 (KRPFPGSSTNYSGIQQDTKKQESDNPEKARG). The span at 342–352 (GSSTNYSGIQQ) shows a compositional bias: polar residues. Over residues 353 to 367 (DTKKQESDNPEKARG) the composition is skewed to basic and acidic residues.

Belongs to the DNA mismatch repair MutL/HexB family.

In terms of biological role, this protein is involved in the repair of mismatches in DNA. It is required for dam-dependent methyl-directed DNA mismatch repair. May act as a 'molecular matchmaker', a protein that promotes the formation of a stable complex between two or more DNA-binding proteins in an ATP-dependent manner without itself being part of a final effector complex. This chain is DNA mismatch repair protein MutL, found in Kosmotoga olearia (strain ATCC BAA-1733 / DSM 21960 / TBF 19.5.1).